Here is a 90-residue protein sequence, read N- to C-terminus: Small ribosomal subunit protein uS15 (90 aa).

The protein belongs to the universal ribosomal protein uS15 family. Part of the 30S ribosomal subunit. Forms a bridge to the 50S subunit in the 70S ribosome, contacting the 23S rRNA.

Functionally, one of the primary rRNA binding proteins, it binds directly to 16S rRNA where it helps nucleate assembly of the platform of the 30S subunit by binding and bridging several RNA helices of the 16S rRNA. Its function is as follows. Forms an intersubunit bridge (bridge B4) with the 23S rRNA of the 50S subunit in the ribosome. In Campylobacter jejuni subsp. jejuni serotype O:6 (strain 81116 / NCTC 11828), this protein is Small ribosomal subunit protein uS15.